The primary structure comprises 105 residues: uncharacterized protein (105 aa).

A helical transmembrane segment spans residues 8–28 (FMTAGIIIALIIAVLAPFLAS). The segment at 32-53 (DGLESTAEKVMPNPETEPVLES) is disordered. A helical transmembrane segment spans residues 72-92 (VSMVIGTILVLAIAYGVGAVF).

The protein to M.jannaschii MJ1570.

The protein resides in the cell membrane. This is an uncharacterized protein from Methanothermobacter thermautotrophicus (strain ATCC 29096 / DSM 1053 / JCM 10044 / NBRC 100330 / Delta H) (Methanobacterium thermoautotrophicum).